The chain runs to 62 residues: Sperm protamine P1 (62 aa).

Residues 1-62 (MARYRHSRSR…RYSRRRRRRY (62 aa)) are disordered.

Belongs to the protamine P1 family. Testis.

The protein resides in the nucleus. The protein localises to the chromosome. Protamines substitute for histones in the chromatin of sperm during the haploid phase of spermatogenesis. They compact sperm DNA into a highly condensed, stable and inactive complex. The sequence is that of Sperm protamine P1 (PRM1) from Bettongia penicillata (Brush-tailed bettong).